The sequence spans 271 residues: Putative phosphoenolpyruvate synthase regulatory protein (271 aa).

Residue 151–158 (GVSRSGKT) participates in ADP binding.

Belongs to the pyruvate, phosphate/water dikinase regulatory protein family. PSRP subfamily.

The enzyme catalyses [pyruvate, water dikinase] + ADP = [pyruvate, water dikinase]-phosphate + AMP + H(+). It catalyses the reaction [pyruvate, water dikinase]-phosphate + phosphate + H(+) = [pyruvate, water dikinase] + diphosphate. Bifunctional serine/threonine kinase and phosphorylase involved in the regulation of the phosphoenolpyruvate synthase (PEPS) by catalyzing its phosphorylation/dephosphorylation. This chain is Putative phosphoenolpyruvate synthase regulatory protein, found in Burkholderia vietnamiensis (strain G4 / LMG 22486) (Burkholderia cepacia (strain R1808)).